A 396-amino-acid polypeptide reads, in one-letter code: Ornithine aminotransferase 2 (396 aa).

K255 is subject to N6-(pyridoxal phosphate)lysine.

This sequence belongs to the class-III pyridoxal-phosphate-dependent aminotransferase family. OAT subfamily. It depends on pyridoxal 5'-phosphate as a cofactor.

The protein resides in the cytoplasm. The enzyme catalyses a 2-oxocarboxylate + L-ornithine = L-glutamate 5-semialdehyde + an L-alpha-amino acid. The protein operates within amino-acid biosynthesis; L-proline biosynthesis; L-glutamate 5-semialdehyde from L-ornithine: step 1/1. Catalyzes the interconversion of ornithine to glutamate semialdehyde. This Staphylococcus saprophyticus subsp. saprophyticus (strain ATCC 15305 / DSM 20229 / NCIMB 8711 / NCTC 7292 / S-41) protein is Ornithine aminotransferase 2.